An 822-amino-acid chain; its full sequence is Molybdenum cofactor sulfurase (822 aa).

K245 is subject to N6-(pyridoxal phosphate)lysine. The active site involves C412. Residues 658-814 (LRLIRQSSND…LKTYSPIKAI (157 aa)) enclose the MOSC domain.

Belongs to the class-V pyridoxal-phosphate-dependent aminotransferase family. MOCOS subfamily. It depends on pyridoxal 5'-phosphate as a cofactor.

The catalysed reaction is Mo-molybdopterin + L-cysteine + AH2 = thio-Mo-molybdopterin + L-alanine + A + H2O. It participates in cofactor biosynthesis; molybdopterin biosynthesis. Its function is as follows. Sulfurates the molybdenum cofactor. Sulfation of molybdenum is essential for xanthine dehydrogenase (XDH) and aldehyde oxidase (ADO) enzymes in which molybdenum cofactor is liganded by 1 oxygen and 1 sulfur atom in active form. This chain is Molybdenum cofactor sulfurase, found in Bombyx mori (Silk moth).